The primary structure comprises 367 residues: Methylthioribose-1-phosphate isomerase (367 aa).

The active-site Proton donor is Asp-250.

It belongs to the eIF-2B alpha/beta/delta subunits family. MtnA subfamily.

It localises to the cytoplasm. The protein resides in the nucleus. The enzyme catalyses 5-(methylsulfanyl)-alpha-D-ribose 1-phosphate = 5-(methylsulfanyl)-D-ribulose 1-phosphate. It functions in the pathway amino-acid biosynthesis; L-methionine biosynthesis via salvage pathway; L-methionine from S-methyl-5-thio-alpha-D-ribose 1-phosphate: step 1/6. In terms of biological role, catalyzes the interconversion of methylthioribose-1-phosphate (MTR-1-P) into methylthioribulose-1-phosphate (MTRu-1-P). In Zea mays (Maize), this protein is Methylthioribose-1-phosphate isomerase (IDI2).